Consider the following 130-residue polypeptide: D-ribose pyranase (130 aa).

H20 functions as the Proton donor in the catalytic mechanism. Residues D28, H97, and 119 to 121 (YSN) each bind substrate.

The protein belongs to the RbsD / FucU family. RbsD subfamily. As to quaternary structure, homodecamer.

It localises to the cytoplasm. It carries out the reaction beta-D-ribopyranose = beta-D-ribofuranose. The protein operates within carbohydrate metabolism; D-ribose degradation; D-ribose 5-phosphate from beta-D-ribopyranose: step 1/2. In terms of biological role, catalyzes the interconversion of beta-pyran and beta-furan forms of D-ribose. This chain is D-ribose pyranase, found in Lacticaseibacillus casei (strain BL23) (Lactobacillus casei).